A 245-amino-acid chain; its full sequence is Ribosomal RNA small subunit methyltransferase G (245 aa).

Residues G85, F90, 108–110 (DST), 136–137 (AE), and R155 contribute to the S-adenosyl-L-methionine site.

It belongs to the methyltransferase superfamily. RNA methyltransferase RsmG family.

It localises to the cytoplasm. Specifically methylates the N7 position of a guanine in 16S rRNA. The polypeptide is Ribosomal RNA small subunit methyltransferase G (Trichormus variabilis (strain ATCC 29413 / PCC 7937) (Anabaena variabilis)).